We begin with the raw amino-acid sequence, 468 residues long: Sorting and assembly machinery component 50 homolog (468 aa).

Positions 1–24 (MGTVHARSLDPLPMNGPDFGSHDD) are disordered. The POTRA domain occupies 44–124 (VVVQRVHFEG…LDVTFEVTEL (81 aa)).

The protein belongs to the SAM50/omp85 family. In terms of assembly, associates with the mitochondrial contact site and cristae organizing system (MICOS) complex (also known as MINOS or MitOS complex).

The protein localises to the mitochondrion outer membrane. Functionally, may play a role in the maintenance of the structure of mitochondrial cristae. The protein is Sorting and assembly machinery component 50 homolog (samm50) of Xenopus tropicalis (Western clawed frog).